Reading from the N-terminus, the 360-residue chain is Decorin (360 aa).

An N-terminal signal peptide occupies residues 1 to 16; sequence MTATLILLLLAQVSWA. Positions 17–30 are excised as a propeptide; that stretch reads GPFQQRGLFDFMLE. O-linked (Xyl...) (glycosaminoglycan) serine glycosylation is present at Ser34. Cystine bridges form between Cys55–Cys61 and Cys59–Cys68. LRR repeat units follow at residues 74–94, 95–118, 119–142, 143–163, 164–187, 188–213, 214–234, 235–258, 259–282, 283–305, 306–335, and 336–360; these read DKVP…NNKI, TEIK…NNKI, SKIS…KNHL, KELP…ENEI, TKVR…TNPL, KSSG…DTNI, TTIP…GNKI, TKID…FNDI, SAVD…NNKL, IRVP…NNNI, SVVG…SNPV, and QYWE…GNYK. Asn212 is a glycosylation site (N-linked (GlcNAc...) asparagine). Residues Asn263 and Asn304 are each glycosylated (N-linked (GlcNAc...) asparagine). Cysteines 314 and 347 form a disulfide.

The protein belongs to the small leucine-rich proteoglycan (SLRP) family. SLRP class I subfamily. Binds to type I and type II collagen, fibronectin and TGF-beta. Forms a ternary complex with MFAP2 and ELN. Interacts with DPT. In terms of processing, the attached glycosaminoglycan chain can be either chondroitin sulfate or dermatan sulfate depending upon the tissue of origin.

The protein localises to the secreted. Its subcellular location is the extracellular space. It is found in the extracellular matrix. Functionally, may affect the rate of fibrils formation. The sequence is that of Decorin (DCN) from Oryctolagus cuniculus (Rabbit).